The sequence spans 447 residues: BAG family molecular chaperone regulator 5 (447 aa).

BAG domains are found at residues 9 to 86 (SISR…EQNA), 95 to 167 (QNIF…EDCM), 182 to 260 (SVAK…DLEE), 275 to 350 (SILK…DLKE), and 365 to 442 (SHKA…DLKS).

Binds to the ATPase domain of HSP/HSP70 chaperones. Binds PRKN. Interacts with HSPA8 and JPH2. As to expression, expressed in the heart.

Co-chaperone for HSP/HSP70 proteins. It functions as a nucleotide-exchange factor promoting the release of ADP from HSP70, thereby activating HSP70-mediated protein refolding. Has an essential role in maintaining proteostasis at junctional membrane complexes (JMC), where it may function as a scaffold between the HSPA8 chaperone and JMC proteins enabling correct, HSPA8-dependent JMC protein folding. Inhibits both auto-ubiquitination of PRKN and ubiquitination of target proteins by PRKN. This Homo sapiens (Human) protein is BAG family molecular chaperone regulator 5 (BAG5).